We begin with the raw amino-acid sequence, 156 residues long: Cellulose synthase operon protein D (156 aa).

It functions in the pathway glycan metabolism; bacterial cellulose biosynthesis. Its function is as follows. May have a major role in the perfection of crystallization, involved either in the pore structure itself or in the organization of the pores within the linear array of terminal synthesizing complexes (TCs). This Komagataeibacter sucrofermentans (strain ATCC 700178 / DSM 15973 / CECT 7291 / JCM 9730 / LMG 18788 / BPR 2001) (Acetobacter xylinus subsp. sucrofermentans) protein is Cellulose synthase operon protein D.